A 152-amino-acid chain; its full sequence is 3-hydroxyacyl-[acyl-carrier-protein] dehydratase FabZ (152 aa).

The active site involves His58.

It belongs to the thioester dehydratase family. FabZ subfamily.

It localises to the cytoplasm. It catalyses the reaction a (3R)-hydroxyacyl-[ACP] = a (2E)-enoyl-[ACP] + H2O. Functionally, involved in unsaturated fatty acids biosynthesis. Catalyzes the dehydration of short chain beta-hydroxyacyl-ACPs and long chain saturated and unsaturated beta-hydroxyacyl-ACPs. In Prochlorococcus marinus (strain MIT 9215), this protein is 3-hydroxyacyl-[acyl-carrier-protein] dehydratase FabZ.